Reading from the N-terminus, the 339-residue chain is MRVYYDRDADLNLIKSKKVAIIGYGSQGHAHANNLKDSGVSDIVIGLRPTSSAVKKAEEAGFKVMEPGEAAAWADVVMVLTPDEGQGALYKESLEKNLKPGAALAFAHGLSIHFRIIEARPDLDVFLIAPKGPGHTVRSEYLRGGGVPSLVAVAQNASGNALEIALSYASANGGGRAGIIETTFKEEVETDLFGEQAVLCGGLVDLIRAGFETLVEGGYAPEMAYFECLHEMKLIVDLIYEGGIANMNYSISNTAEYGEYVTGPRIITPETKAEMKRVLTDIQDGTFVRNFILENQSGGVGFKAIRARNDAHPIEKTGEKLRAMMPWIAKGKLVDKAKN.

The KARI N-terminal Rossmann domain occupies 1–182; sequence MRVYYDRDAD…GGGRAGIIET (182 aa). NADP(+) contacts are provided by residues 24-27, Arg-48, Ser-51, and 83-86; these read YGSQ and DEGQ. The active site involves His-108. Gly-134 serves as a coordination point for NADP(+). The region spanning 183 to 328 is the KARI C-terminal knotted domain; that stretch reads TFKEEVETDL…EKLRAMMPWI (146 aa). Mg(2+) contacts are provided by Asp-191, Glu-195, Glu-227, and Glu-231. Ser-252 contributes to the substrate binding site.

Belongs to the ketol-acid reductoisomerase family. Mg(2+) serves as cofactor.

The catalysed reaction is (2R)-2,3-dihydroxy-3-methylbutanoate + NADP(+) = (2S)-2-acetolactate + NADPH + H(+). It carries out the reaction (2R,3R)-2,3-dihydroxy-3-methylpentanoate + NADP(+) = (S)-2-ethyl-2-hydroxy-3-oxobutanoate + NADPH + H(+). It functions in the pathway amino-acid biosynthesis; L-isoleucine biosynthesis; L-isoleucine from 2-oxobutanoate: step 2/4. Its pathway is amino-acid biosynthesis; L-valine biosynthesis; L-valine from pyruvate: step 2/4. Involved in the biosynthesis of branched-chain amino acids (BCAA). Catalyzes an alkyl-migration followed by a ketol-acid reduction of (S)-2-acetolactate (S2AL) to yield (R)-2,3-dihydroxy-isovalerate. In the isomerase reaction, S2AL is rearranged via a Mg-dependent methyl migration to produce 3-hydroxy-3-methyl-2-ketobutyrate (HMKB). In the reductase reaction, this 2-ketoacid undergoes a metal-dependent reduction by NADPH to yield (R)-2,3-dihydroxy-isovalerate. This Gluconobacter oxydans (strain 621H) (Gluconobacter suboxydans) protein is Ketol-acid reductoisomerase (NADP(+)).